Consider the following 240-residue polypeptide: UDP-2,3-diacylglucosamine hydrolase (240 aa).

Mn(2+)-binding residues include D8, H10, D41, N78, and H113. A substrate-binding site is contributed by 78 to 79; the sequence is NR. 5 residues coordinate substrate: D121, S159, N163, K166, and H194. 2 residues coordinate Mn(2+): H194 and H196.

It belongs to the LpxH family. It depends on Mn(2+) as a cofactor.

It is found in the cell inner membrane. The enzyme catalyses UDP-2-N,3-O-bis[(3R)-3-hydroxytetradecanoyl]-alpha-D-glucosamine + H2O = 2-N,3-O-bis[(3R)-3-hydroxytetradecanoyl]-alpha-D-glucosaminyl 1-phosphate + UMP + 2 H(+). It functions in the pathway glycolipid biosynthesis; lipid IV(A) biosynthesis; lipid IV(A) from (3R)-3-hydroxytetradecanoyl-[acyl-carrier-protein] and UDP-N-acetyl-alpha-D-glucosamine: step 4/6. Functionally, hydrolyzes the pyrophosphate bond of UDP-2,3-diacylglucosamine to yield 2,3-diacylglucosamine 1-phosphate (lipid X) and UMP by catalyzing the attack of water at the alpha-P atom. Involved in the biosynthesis of lipid A, a phosphorylated glycolipid that anchors the lipopolysaccharide to the outer membrane of the cell. This chain is UDP-2,3-diacylglucosamine hydrolase, found in Shewanella baltica (strain OS155 / ATCC BAA-1091).